Reading from the N-terminus, the 210-residue chain is 3-hexulose-6-phosphate synthase (210 aa).

Belongs to the HPS/KGPDC family. HPS subfamily.

The catalysed reaction is D-ribulose 5-phosphate + formaldehyde = D-arabino-hex-3-ulose 6-phosphate. It participates in one-carbon metabolism; formaldehyde assimilation via RuMP pathway; D-fructose 6-phosphate from D-ribulose 5-phosphate and formaldehyde: step 1/2. Functionally, catalyzes the condensation of ribulose 5-phosphate with formaldehyde to form 3-hexulose 6-phosphate. This Staphylococcus aureus (strain NCTC 8325 / PS 47) protein is 3-hexulose-6-phosphate synthase.